Consider the following 162-residue polypeptide: Large ribosomal subunit protein uL15 (162 aa).

Over residues 1-10 (MNLNELRDNA) the composition is skewed to basic and acidic residues. Residues 1–39 (MNLNELRDNAGSRYRKKRLGRGIGSGKGKTSGKGVKGQK) form a disordered region. The span at 21-35 (RGIGSGKGKTSGKGV) shows a compositional bias: gly residues.

It belongs to the universal ribosomal protein uL15 family. In terms of assembly, part of the 50S ribosomal subunit.

Its function is as follows. Binds to the 23S rRNA. This is Large ribosomal subunit protein uL15 from Gluconacetobacter diazotrophicus (strain ATCC 49037 / DSM 5601 / CCUG 37298 / CIP 103539 / LMG 7603 / PAl5).